A 147-amino-acid polypeptide reads, in one-letter code: Transmembrane protein 210 (147 aa).

An N-terminal signal peptide occupies residues 1–31; the sequence is MAPGPWPVSCLRGGPLGLTYLSLLLIPAAAG. Topologically, residues 32–47 are extracellular; the sequence is TYCECSLGLSREALIA. A helical membrane pass occupies residues 48-68; the sequence is LLVVLAGISASCFCALVIVAI. Topologically, residues 69–147 are cytoplasmic; that stretch reads GVLRAKGETC…PPPPPPLPPE (79 aa). Residues 128-147 form a disordered region; sequence AIPMEASSEEPPPPPPLPPE. Positions 137 to 147 are enriched in pro residues; the sequence is EPPPPPPLPPE.

The protein localises to the membrane. The protein resides in the cytoplasmic vesicle. It localises to the secretory vesicle. It is found in the acrosome. In Homo sapiens (Human), this protein is Transmembrane protein 210 (TMEM210).